The sequence spans 120 residues: NAD(P)H-quinone oxidoreductase subunit 3, chloroplastic (120 aa).

Helical transmembrane passes span I9–G29, M64–M84, and V88–L108.

It belongs to the complex I subunit 3 family. In terms of assembly, NDH is composed of at least 16 different subunits, 5 of which are encoded in the nucleus.

Its subcellular location is the plastid. It localises to the chloroplast thylakoid membrane. It carries out the reaction a plastoquinone + NADH + (n+1) H(+)(in) = a plastoquinol + NAD(+) + n H(+)(out). The enzyme catalyses a plastoquinone + NADPH + (n+1) H(+)(in) = a plastoquinol + NADP(+) + n H(+)(out). Functionally, NDH shuttles electrons from NAD(P)H:plastoquinone, via FMN and iron-sulfur (Fe-S) centers, to quinones in the photosynthetic chain and possibly in a chloroplast respiratory chain. The immediate electron acceptor for the enzyme in this species is believed to be plastoquinone. Couples the redox reaction to proton translocation, and thus conserves the redox energy in a proton gradient. The protein is NAD(P)H-quinone oxidoreductase subunit 3, chloroplastic of Draba nemorosa (Woodland whitlowgrass).